The chain runs to 3354 residues: Cadherin-23 (3354 aa).

Residues 1-23 (MGRHVATSCHVAWLLVLISGCWG) form the signal peptide. Over 24–3064 (QVNRLPFFTN…SVRLPDDMSA (3041 aa)) the chain is Extracellular. Cadherin domains follow at residues 34 to 132 (HFFD…APTF), 133 to 236 (HNQP…DPIF), 237 to 348 (INLP…APEF), 349 to 460 (NSSE…RPIF), 461 to 561 (SQPL…VPTF), 562 to 671 (QKDA…PPTF), 672 to 784 (SKPA…APYY), 779 to 890 (KDAP…DPTF), 891 to 995 (QNLP…TPTF), 996 to 1102 (FPAV…RPIF), 1103 to 1208 (LQSS…APVF), 1210 to 1313 (QQQY…AVQF), 1314 to 1418 (SNAS…SPRF), 1420 to 1527 (FTSD…PPVI), 1529 to 1634 (SPFG…APMF), 1635 to 1744 (QQPH…VPTF), 1745 to 1851 (PRDY…DPVL), 1852 to 1959 (LNLP…HPLF), 1960 to 2069 (TKST…RPTF), 2070 to 2174 (SPAT…RPEF), 2175 to 2293 (LNPI…TPQF), 2297 to 2402 (GITY…NPIF), 2403 to 2509 (DQPS…RPQF), 2510 to 2611 (SKPQ…RPVF), 2614 to 2722 (PPNG…EPLF), 2729 to 2846 (SPQY…PPRF), and 2847 to 2975 (TKAE…EEEF). Asn-155 and Asn-206 each carry an N-linked (GlcNAc...) asparagine glycan. Asn-349, Asn-393, Asn-434, Asn-466, Asn-472, Asn-652, Asn-694, Asn-765, Asn-810, Asn-827, Asn-941, Asn-1001, Asn-1018, Asn-1171, Asn-1282, Asn-1315, Asn-1473, Asn-1534, Asn-1651, Asn-1667, Asn-1818, Asn-1857, Asn-1889, Asn-1902, Asn-2013, Asn-2050, Asn-2129, Asn-2168, Asn-2195, Asn-2263, Asn-2357, and Asn-2369 each carry an N-linked (GlcNAc...) asparagine glycan. Asn-2616, Asn-2749, Asn-2808, Asn-2877, Asn-2896, Asn-2941, and Asn-2981 each carry an N-linked (GlcNAc...) asparagine glycan. Residues 3065–3085 (LQMAIIVLAILLFLAAMLFVL) form a helical membrane-spanning segment. The Cytoplasmic portion of the chain corresponds to 3086 to 3354 (MNWYYRTVHK…METPLEITEL (269 aa)).

Antiparallel heterodimer with PCDH15. Interacts with USH1C and USH1G. In terms of tissue distribution, particularly strong expression in the retina. Found also in the cochlea.

It is found in the cell membrane. Functionally, cadherins are calcium-dependent cell adhesion proteins. They preferentially interact with themselves in a homophilic manner in connecting cells. CDH23 is required for establishing and/or maintaining the proper organization of the stereocilia bundle of hair cells in the cochlea and the vestibule during late embryonic/early postnatal development. It is part of the functional network formed by USH1C, USH1G, CDH23 and MYO7A that mediates mechanotransduction in cochlear hair cells. Required for normal hearing. The polypeptide is Cadherin-23 (Homo sapiens (Human)).